We begin with the raw amino-acid sequence, 154 residues long: Ribosomal RNA large subunit methyltransferase H (154 aa).

Residues G103 and 122–127 (FSKLTF) contribute to the S-adenosyl-L-methionine site.

The protein belongs to the RNA methyltransferase RlmH family. Homodimer.

Its subcellular location is the cytoplasm. The catalysed reaction is pseudouridine(1915) in 23S rRNA + S-adenosyl-L-methionine = N(3)-methylpseudouridine(1915) in 23S rRNA + S-adenosyl-L-homocysteine + H(+). Specifically methylates the pseudouridine at position 1915 (m3Psi1915) in 23S rRNA. The chain is Ribosomal RNA large subunit methyltransferase H from Caldicellulosiruptor saccharolyticus (strain ATCC 43494 / DSM 8903 / Tp8T 6331).